The sequence spans 246 residues: MKICIFFTLLGTVAAFPTEDNDDRIVGGYTCQEHSVPYQVSLNAGSHICGGSLITDQWVLSAAHCYHPQLQVRLGEHNIYEIEGAEQFIDAAKMILHPDYDKWTVDNDIMLIKLKSPATLNSKVSTIPLPQYCPTAGTECLVSGWGVLKFGFESPSVLQCLDAPVLSDSVCHKAYPRQITNNMFCLGFLEGGKDSCQYDSGGPVVCNGEVQGIVSWGDGCALEGKPGVYTKVCNYLNWIQQTVAAN.

Residues 1–15 (MKICIFFTLLGTVAA) form the signal peptide. Residues 16–24 (FPTEDNDDR) constitute a propeptide, activation peptide. Residues 25–244 (IVGGYTCQEH…YLNWIQQTVA (220 aa)) form the Peptidase S1 domain. Cystine bridges form between Cys-31–Cys-160, Cys-49–Cys-65, Cys-133–Cys-233, Cys-140–Cys-206, Cys-171–Cys-185, and Cys-196–Cys-220. Residue His-64 is the Charge relay system of the active site. Residues Glu-76, Asn-78, and Glu-86 each coordinate Ca(2+). The active-site Charge relay system is Asp-108. Ser-200 functions as the Charge relay system in the catalytic mechanism.

This sequence belongs to the peptidase S1 family. Requires Ca(2+) as cofactor.

It localises to the secreted. Its subcellular location is the extracellular space. It catalyses the reaction Preferential cleavage: Arg-|-Xaa, Lys-|-Xaa.. In Rattus norvegicus (Rat), this protein is Trypsin V-B.